The sequence spans 368 residues: Glutamine synthetase root isozyme 2 (368 aa).

The 81-residue stretch at 19-99 (IIAEYIWVGG…VMCDCYEPNG (81 aa)) folds into the GS beta-grasp domain. Positions 38-66 (RTLSGPVDDPSKLPKWNFDGSSTGQAPGD) are disordered. Residues 106–368 (KRHGAAKIFS…NGDGKGAAAP (263 aa)) form the GS catalytic domain.

Belongs to the glutamine synthetase family. In terms of assembly, homooctamer. As to expression, found mainly in the vascular tissues of seedling roots.

The protein resides in the cytoplasm. It carries out the reaction L-glutamate + NH4(+) + ATP = L-glutamine + ADP + phosphate + H(+). Its function is as follows. Plays a role in the flow of nitrogen into nitrogenous organic compounds. The chain is Glutamine synthetase root isozyme 2 (GLN2) from Zea mays (Maize).